The sequence spans 880 residues: Translation initiation factor IF-2 (880 aa).

Over residues 143 to 228 (EAEAKAKAKA…EAERNGDHHI (86 aa)) the composition is skewed to basic and acidic residues. The segment at 143–289 (EAEAKAKAKA…APESMAHGFN (147 aa)) is disordered. Positions 249–262 (GRRARNKSNAKKRG) are enriched in basic residues. Residues 380–549 (SRAPVVTIMG…LLQAEVLELK (170 aa)) enclose the tr-type G domain. Positions 389–396 (GHVDHGKT) are G1. Position 389 to 396 (389 to 396 (GHVDHGKT)) interacts with GTP. Positions 414–418 (GITQH) are G2. The tract at residues 435–438 (DTPG) is G3. Residues 435–439 (DTPGH) and 489–492 (NKMD) contribute to the GTP site. The tract at residues 489 to 492 (NKMD) is G4. The tract at residues 525–527 (SAK) is G5.

Belongs to the TRAFAC class translation factor GTPase superfamily. Classic translation factor GTPase family. IF-2 subfamily.

Its subcellular location is the cytoplasm. Functionally, one of the essential components for the initiation of protein synthesis. Protects formylmethionyl-tRNA from spontaneous hydrolysis and promotes its binding to the 30S ribosomal subunits. Also involved in the hydrolysis of GTP during the formation of the 70S ribosomal complex. This is Translation initiation factor IF-2 from Shewanella putrefaciens (strain CN-32 / ATCC BAA-453).